We begin with the raw amino-acid sequence, 286 residues long: Transcription factor MafA (286 aa).

Phosphoserine is present on residues Ser-14 and Ser-49. Low complexity predominate over residues 51 to 85 (SSTPLSTPCSSVPSSPSFCAPSPGGQPSAGPTAAP). The tract at residues 51-87 (SSTPLSTPCSSVPSSPSFCAPSPGGQPSAGPTAAPLG) is disordered. Phosphothreonine occurs at positions 53 and 57. Phosphoserine is present on residues Ser-61 and Ser-65. Thr-113 bears the Phosphothreonine mark. A disordered region spans residues 126–167 (HHHHHHHQSYESFRPQPFGGEELPPAAHHHNAHHHHHHHHLR). Over residues 152-166 (AHHHNAHHHHHHHHL) the composition is skewed to basic residues. Positions 199–224 (RLKQNRRTLKNRGYAQSCRYKRVQQR) are basic motif. The 64-residue stretch at 199-262 (RLKQNRRTLK…DLYKEKYEKL (64 aa)) folds into the bZIP domain. Positions 227-248 (LENEKCQLQSQVEQLKQEVSRL) are leucine-zipper. The tract at residues 265–286 (RGFPREPSPPAAPKTTAADFFM) is disordered. The residue at position 272 (Ser-272) is a Phosphoserine. A compositionally biased stretch (low complexity) spans 277–286 (PKTTAADFFM).

It belongs to the bZIP family. Maf subfamily. Forms homodimers or heterodimers. May interact (via leucine-zipper domain) with MAFB. May interact with FOS and JUN. Interacts with PCAF; this interaction impairs MAFA ubiquitination.

The protein localises to the nucleus. Functionally, transcription factor involved in transcription regulation during lens development, including that of crystallin and filensin/BFSP1 genes. Binds to CRE-type MARE 5'-TGCTGACGTCAGCA-3' and TRE-type MARE 5'-TGCTGACTCAGCA-3' DNA sequences. The chain is Transcription factor MafA (MAFA) from Gallus gallus (Chicken).